The sequence spans 288 residues: ATP synthase gamma chain (288 aa).

The protein belongs to the ATPase gamma chain family. In terms of assembly, F-type ATPases have 2 components, CF(1) - the catalytic core - and CF(0) - the membrane proton channel. CF(1) has five subunits: alpha(3), beta(3), gamma(1), delta(1), epsilon(1). CF(0) has three main subunits: a, b and c.

It localises to the cell inner membrane. Its function is as follows. Produces ATP from ADP in the presence of a proton gradient across the membrane. The gamma chain is believed to be important in regulating ATPase activity and the flow of protons through the CF(0) complex. The chain is ATP synthase gamma chain from Vibrio vulnificus (strain CMCP6).